Here is a 266-residue protein sequence, read N- to C-terminus: Glutamate racemase (266 aa).

Residues 9-10 and 41-42 contribute to the substrate site; these read DS and YG. Cysteine 72 functions as the Proton donor/acceptor in the catalytic mechanism. Residue 73-74 participates in substrate binding; sequence NT. The active-site Proton donor/acceptor is cysteine 183. Position 184 to 185 (184 to 185) interacts with substrate; that stretch reads TH.

The protein belongs to the aspartate/glutamate racemases family.

The catalysed reaction is L-glutamate = D-glutamate. It participates in cell wall biogenesis; peptidoglycan biosynthesis. Its function is as follows. Provides the (R)-glutamate required for cell wall biosynthesis. The sequence is that of Glutamate racemase from Listeria monocytogenes serotype 4b (strain CLIP80459).